A 126-amino-acid polypeptide reads, in one-letter code: Putative phosphotransferase enzyme IIB component UU178 (126 aa).

The helical transmembrane segment at 11–31 (LIIFLGIITFGIFIIYFFTKA) threads the bilayer. Residues 49–126 (PFSLNDFYNC…KELIKKDLFS (78 aa)) enclose the PTS EIIB type-1 domain.

This sequence to M.genitalium MG129 and M.pneumoniae MPN268.

It localises to the membrane. In terms of biological role, the phosphoenolpyruvate-dependent sugar phosphotransferase system (PTS), a major carbohydrate active -transport system, catalyzes the phosphorylation of incoming sugar substrates concomitant with their translocation across the cell membrane. The polypeptide is Putative phosphotransferase enzyme IIB component UU178 (Ureaplasma parvum serovar 3 (strain ATCC 700970)).